The sequence spans 663 residues: Zinc finger protein GLI2 (663 aa).

The disordered stretch occupies residues 159–186 (ISSNSNCISDSSQSKQSSESAVSSTVNP). The segment covering 160-182 (SSNSNCISDSSQSKQSSESAVSS) has biased composition (low complexity). C2H2-type zinc fingers lie at residues 234-259 (TNCH…NNDH), 267-294 (FVCR…MRRH), 300-324 (HKCT…LRSH), 330-355 (YVCE…NRTH), and 361-386 (YVCK…KTVH). Disordered stretches follow at residues 374-440 (DPSS…MEDC), 452-481 (VMCQ…DSGV), 544-578 (CSWV…SRTL), and 619-663 (SGIS…DIKL). The segment covering 386–402 (HGPDAHVTKKQRNDVHP) has biased composition (basic and acidic residues). Over residues 456–473 (SSPGGQSSCSSEPSPLGS) the composition is skewed to low complexity. 2 stretches are compositionally biased toward polar residues: residues 563-578 (GNGS…SRTL) and 619-647 (SGIS…SSAD).

This sequence belongs to the GLI C2H2-type zinc-finger protein family.

It localises to the nucleus. The protein resides in the cytoplasm. The protein localises to the cell projection. Its subcellular location is the cilium. Its function is as follows. Functions as a transcription regulator in the hedgehog (Hh) pathway. Functions as a transcriptional activator. May also function as transcriptional repressor. Binds to the DNA sequence 5'-GAACCACCCA-3'. Is involved in the smoothened (SHH) signaling pathway. Required for normal skeleton development. The polypeptide is Zinc finger protein GLI2 (Gallus gallus (Chicken)).